The chain runs to 829 residues: Outer dense fiber protein 2 (829 aa).

Phosphoserine occurs at positions 73 and 74. Position 92 is a phosphothreonine (Thr92). Ser95 carries the phosphoserine; by TSSK4 modification. Phosphoserine occurs at positions 106 and 109. At Thr110 the chain carries Phosphothreonine. Phosphoserine is present on residues Ser115 and Ser129. Residue Lys138 forms a Glycyl lysine isopeptide (Lys-Gly) (interchain with G-Cter in SUMO2) linkage. Ser139 bears the Phosphoserine mark. The stretch at 144–217 forms a coiled coil; the sequence is QKGERQMAKR…MSKLVEAEMD (74 aa). A Phosphothreonine modification is found at Thr231. Coiled-coil stretches lie at residues 245–423 and 461–798; these read DINT…AEQL and EIIV…NYVQ. Position 261 is a phosphoserine (Ser261). Residues 392 to 413 are disordered; it reads KQKGDRDKESLKKAIRAQKERA. Residues 537-701 are interaction with BBOF1; it reads KNYEGMIDNY…EAIHQSQLRL (165 aa). Residue Ser632 is modified to Phosphoserine.

Belongs to the ODF2 family. Self-associates. Associates with microtubules and forms a fibrillar structure partially linked to the microtubule network. Interacts via its C-terminus with PLK1. Interacts with ODF1. Interacts with MARK4; the interaction is required for localization of ODF2 to centrioles. Interacts with TSSK4. Interacts with AKNA. Interacts with QRICH2. Interacts with CFAP58. Interacts with BBOF1. Interacts with CCDC38. Interacts with CCDC42. Post-translationally, tyrosine phosphorylated. Phosphorylated by TSSK4 on Ser-95. In terms of tissue distribution, testis-specific (at protein level). Highly expressed in cytoplasm of step 2 round spermatids. Detected in the middle piece and extends to about half the principal piece of the sperm tails.

The protein resides in the cytoplasm. The protein localises to the cytoskeleton. It localises to the microtubule organizing center. Its subcellular location is the centrosome. It is found in the cell projection. The protein resides in the cilium. The protein localises to the centriole. It localises to the spindle pole. Its subcellular location is the flagellum. Its function is as follows. Seems to be a major component of sperm tail outer dense fibers (ODF). ODFs are filamentous structures located on the outside of the axoneme in the midpiece and principal piece of the mammalian sperm tail and may help to maintain the passive elastic structures and elastic recoil of the sperm tail. May have a modulating influence on sperm motility. Functions as a general scaffold protein that is specifically localized at the distal/subdistal appendages of mother centrioles. Component of the centrosome matrix required for the localization of PLK1 and NIN to the centrosomes. Required for the formation and/or maintenance of normal CETN1 assembly. The polypeptide is Outer dense fiber protein 2 (ODF2) (Homo sapiens (Human)).